Consider the following 608-residue polypeptide: Probable adenylate kinase 5, chloroplastic (608 aa).

Residues 1-20 (MAASSSSSSPAAASAPFAAP) show a composition bias toward low complexity. Residues 1-44 (MAASSSSSSPAAASAPFAAPGPHRRPGLALRPSPPTPPSSSLSC) are disordered. The transit peptide at 1-75 (MAASSSSSSP…GPRGMGLRCR (75 aa)) directs the protein to the chloroplast. 99–104 (ASGKGT) is an ATP binding site. The tract at residues 119-148 (STGDLLRAEVSSGTEIGKKAKEYMDNGMLV) is NMP. Residues T120, R125, 146–148 (MLV), 175–178 (GYPR), and Q182 contribute to the AMP site. Residues R209, R213, and 222 to 223 (IY) each bind ATP. The LID stretch occupies residues 212 to 245 (GRRLDPETGKIYHIKNFPPENDEVSARLVTRSDD). Positions 242 and 253 each coordinate AMP.

This sequence belongs to the adenylate kinase family.

It localises to the plastid. The protein resides in the chloroplast. It carries out the reaction AMP + ATP = 2 ADP. In terms of biological role, catalyzes the reversible transfer of the terminal phosphate group between ATP and AMP. Plays an important role in cellular energy homeostasis and in adenine nucleotide metabolism. The protein is Probable adenylate kinase 5, chloroplastic of Oryza sativa subsp. japonica (Rice).